The primary structure comprises 443 residues: Proline--tRNA ligase (443 aa).

It belongs to the class-II aminoacyl-tRNA synthetase family. ProS type 2 subfamily. Homodimer.

Its subcellular location is the cytoplasm. It catalyses the reaction tRNA(Pro) + L-proline + ATP = L-prolyl-tRNA(Pro) + AMP + diphosphate. Its function is as follows. Catalyzes the attachment of proline to tRNA(Pro) in a two-step reaction: proline is first activated by ATP to form Pro-AMP and then transferred to the acceptor end of tRNA(Pro). This chain is Proline--tRNA ligase, found in Zymomonas mobilis subsp. mobilis (strain ATCC 31821 / ZM4 / CP4).